A 354-amino-acid chain; its full sequence is Ferrochelatase (354 aa).

Fe cation is bound by residues H204 and E306.

Belongs to the ferrochelatase family.

It localises to the cytoplasm. The enzyme catalyses heme b + 2 H(+) = protoporphyrin IX + Fe(2+). The protein operates within porphyrin-containing compound metabolism; protoheme biosynthesis; protoheme from protoporphyrin-IX: step 1/1. In terms of biological role, catalyzes the ferrous insertion into protoporphyrin IX. This is Ferrochelatase from Coxiella burnetii (strain RSA 493 / Nine Mile phase I).